The chain runs to 348 residues: tRNA N6-adenosine threonylcarbamoyltransferase (348 aa).

Fe cation-binding residues include histidine 111 and histidine 115. Substrate-binding positions include 134 to 138 (LVSGG), aspartate 167, glycine 180, and asparagine 276. Aspartate 304 is a Fe cation binding site.

This sequence belongs to the KAE1 / TsaD family. The cofactor is Fe(2+).

It localises to the cytoplasm. The enzyme catalyses L-threonylcarbamoyladenylate + adenosine(37) in tRNA = N(6)-L-threonylcarbamoyladenosine(37) in tRNA + AMP + H(+). In terms of biological role, required for the formation of a threonylcarbamoyl group on adenosine at position 37 (t(6)A37) in tRNAs that read codons beginning with adenine. Is involved in the transfer of the threonylcarbamoyl moiety of threonylcarbamoyl-AMP (TC-AMP) to the N6 group of A37, together with TsaE and TsaB. TsaD likely plays a direct catalytic role in this reaction. This chain is tRNA N6-adenosine threonylcarbamoyltransferase, found in Bordetella petrii (strain ATCC BAA-461 / DSM 12804 / CCUG 43448).